Consider the following 190-residue polypeptide: GTP cyclohydrolase 1 (190 aa).

3 residues coordinate Zn(2+): cysteine 80, histidine 83, and cysteine 151.

Belongs to the GTP cyclohydrolase I family. In terms of assembly, toroid-shaped homodecamer, composed of two pentamers of five dimers.

The enzyme catalyses GTP + H2O = 7,8-dihydroneopterin 3'-triphosphate + formate + H(+). The protein operates within cofactor biosynthesis; 7,8-dihydroneopterin triphosphate biosynthesis; 7,8-dihydroneopterin triphosphate from GTP: step 1/1. This chain is GTP cyclohydrolase 1, found in Rickettsia typhi (strain ATCC VR-144 / Wilmington).